Consider the following 264-residue polypeptide: Thiazole synthase (264 aa).

Lys-98 serves as the catalytic Schiff-base intermediate with DXP. Residues Gly-159, 185-186 (AG), and 207-208 (AS) contribute to the 1-deoxy-D-xylulose 5-phosphate site.

It belongs to the ThiG family. In terms of assembly, homotetramer. Forms heterodimers with either ThiH or ThiS.

It is found in the cytoplasm. The enzyme catalyses [ThiS sulfur-carrier protein]-C-terminal-Gly-aminoethanethioate + 2-iminoacetate + 1-deoxy-D-xylulose 5-phosphate = [ThiS sulfur-carrier protein]-C-terminal Gly-Gly + 2-[(2R,5Z)-2-carboxy-4-methylthiazol-5(2H)-ylidene]ethyl phosphate + 2 H2O + H(+). It functions in the pathway cofactor biosynthesis; thiamine diphosphate biosynthesis. Catalyzes the rearrangement of 1-deoxy-D-xylulose 5-phosphate (DXP) to produce the thiazole phosphate moiety of thiamine. Sulfur is provided by the thiocarboxylate moiety of the carrier protein ThiS. In vitro, sulfur can be provided by H(2)S. This chain is Thiazole synthase, found in Streptomyces griseus subsp. griseus (strain JCM 4626 / CBS 651.72 / NBRC 13350 / KCC S-0626 / ISP 5235).